The sequence spans 587 residues: Chaperonin CPN60, mitochondrial (587 aa).

Residues 1–32 (MYRLISSIASKARVARNCTSQIGSRLSSTRNY) constitute a mitochondrion transit peptide.

This sequence belongs to the chaperonin (HSP60) family.

The protein localises to the mitochondrion. Implicated in mitochondrial protein import and macromolecular assembly. May facilitate the correct folding of imported proteins. May also prevent misfolding and promote the refolding and proper assembly of unfolded polypeptides generated under stress conditions in the mitochondrial matrix. The sequence is that of Chaperonin CPN60, mitochondrial from Brassica napus (Rape).